The following is a 682-amino-acid chain: Methionine--tRNA ligase (682 aa).

The 'HIGH' region motif lies at 12-22 (PYANGAIHLGH). Zn(2+) is bound by residues Cys143, Cys146, Cys156, and Cys159. Positions 328–332 (KMSKS) match the 'KMSKS' region motif. An ATP-binding site is contributed by Lys331. Positions 580 to 682 (DFAKLDLRVA…EGIRPGMQVK (103 aa)) constitute a tRNA-binding domain.

It belongs to the class-I aminoacyl-tRNA synthetase family. MetG type 1 subfamily. In terms of assembly, homodimer. Zn(2+) is required as a cofactor.

The protein localises to the cytoplasm. It carries out the reaction tRNA(Met) + L-methionine + ATP = L-methionyl-tRNA(Met) + AMP + diphosphate. Its function is as follows. Is required not only for elongation of protein synthesis but also for the initiation of all mRNA translation through initiator tRNA(fMet) aminoacylation. The sequence is that of Methionine--tRNA ligase from Actinobacillus pleuropneumoniae serotype 7 (strain AP76).